The sequence spans 391 residues: Saxitoxin and tetrodotoxin-binding protein 1 (391 aa).

A signal peptide spans 1–20 (MGAVPGVVLLLMLAVLGIRA). Repeat copies occupy residues 24-202 (PEEC…HKKS) and 203-391 (PEEC…PEQD). N-linked (GlcNAc...) asparagine glycosylation is found at asparagine 54, asparagine 63, asparagine 97, asparagine 234, asparagine 268, asparagine 277, and asparagine 307.

As to quaternary structure, homodimer or heterodimer of PSTBP1 and PSTBP2. In terms of processing, glycosylated.

It is found in the secreted. Binds both saxitoxin and tetradotoxin. May play a role in toxin accumulation and/or excretion. The protein is Saxitoxin and tetrodotoxin-binding protein 1 (psbp1) of Takifugu pardalis (Panther puffer).